The sequence spans 197 residues: Nucleoid occlusion factor SlmA (197 aa).

The 61-residue stretch at 7–67 (INRREHILQC…GLIEFIEESL (61 aa)) folds into the HTH tetR-type domain. The segment at residues 30-49 (TTAKLASEVGVSEAALYRHF) is a DNA-binding region (H-T-H motif). Positions 110 to 130 (ALLGENERLRSRISSLFAKIE) form a coiled coil.

The protein belongs to the nucleoid occlusion factor SlmA family. As to quaternary structure, homodimer. Interacts with FtsZ.

It localises to the cytoplasm. The protein localises to the nucleoid. Required for nucleoid occlusion (NO) phenomenon, which prevents Z-ring formation and cell division over the nucleoid. Acts as a DNA-associated cell division inhibitor that binds simultaneously chromosomal DNA and FtsZ, and disrupts the assembly of FtsZ polymers. SlmA-DNA-binding sequences (SBS) are dispersed on non-Ter regions of the chromosome, preventing FtsZ polymerization at these regions. This is Nucleoid occlusion factor SlmA from Shewanella sp. (strain W3-18-1).